Here is a 104-residue protein sequence, read N- to C-terminus: MAANPSGQGFQNKNRVAILAELDKEKRKLLMQNQSSTNHPGASIALSRPALNKDFRDHAEQQHIAAQQKAALQHAHAHSSGYFITQDSAFGNLILPVLPRLDPE.

Residue alanine 2 is modified to N-acetylalanine.

The protein belongs to the SOSS-C family. Component of the SOSS complex, composed of SOSS-B (SOSS-B1/NABP2 or SOSS-B2/NABP1), SOSS-A/INTS3 and SOSS-C/INIP. SOSS complexes containing SOSS-B1/NABP2 are more abundant than complexes containing SOSS-B2/NABP1. Interacts with INTS3; the interaction is direct.

It is found in the nucleus. In terms of biological role, component of the SOSS complex, a multiprotein complex that functions downstream of the MRN complex to promote DNA repair and G2/M checkpoint. The SOSS complex associates with single-stranded DNA at DNA lesions and influences diverse endpoints in the cellular DNA damage response including cell-cycle checkpoint activation, recombinational repair and maintenance of genomic stability. Required for efficient homologous recombination-dependent repair of double-strand breaks (DSBs) and ATM-dependent signaling pathways. The sequence is that of SOSS complex subunit C (INIP) from Bos taurus (Bovine).